The primary structure comprises 652 residues: Aorsin (652 aa).

A signal peptide spans 1–22 (MRPLSHLSFFNGLLLGLSALSA). Residues 23–215 (ATSVVHERRE…PRPIQQHDVK (193 aa)) constitute a propeptide, removed in mature form. N-linked (GlcNAc...) asparagine glycosylation occurs at asparagine 112. A disordered region spans residues 177–211 (VNLNPSSGKPSSIRRRAAASKKTKLPARGPRPIQQ). A compositionally biased stretch (basic residues) spans 188 to 201 (SIRRRAAASKKTKL). N-linked (GlcNAc...) asparagine glycosylation is found at asparagine 218 and asparagine 247. The region spanning 225 to 651 (LITPECIRAL…PKMLKLWLDL (427 aa)) is the Peptidase S53 domain. Active-site charge relay system residues include glutamate 301 and aspartate 305. Asparagine 331 and asparagine 445 each carry an N-linked (GlcNAc...) asparagine glycan. The active-site Charge relay system is serine 569. Positions 610 and 611 each coordinate Ca(2+). N-linked (GlcNAc...) asparagine glycosylation occurs at asparagine 613. Ca(2+) contacts are provided by glycine 629 and aspartate 631.

Ca(2+) serves as cofactor. In terms of processing, N-glycosylated. O-glycosylated.

Its subcellular location is the secreted. The protein resides in the extracellular space. Its activity is regulated as follows. Inhibited by antipain and leupeptin. Functionally, serine endopeptidase which hydrolyzes a range of fluorogenic peptide substrates containing the basic residues arginine or lysine at the P1 position and prefers paired basic resides. Also hydrolyzes clupeine and salmine, activates plasminogen and converts trypsinogen to trypsin. The polypeptide is Aorsin (Aspergillus oryzae (strain ATCC 42149 / RIB 40) (Yellow koji mold)).